Here is a 164-residue protein sequence, read N- to C-terminus: ATP synthase subunit b 1 (164 aa).

Residues proline 8 to valine 28 traverse the membrane as a helical segment.

It belongs to the ATPase B chain family. In terms of assembly, F-type ATPases have 2 components, F(1) - the catalytic core - and F(0) - the membrane proton channel. F(1) has five subunits: alpha(3), beta(3), gamma(1), delta(1), epsilon(1). F(0) has three main subunits: a(1), b(2) and c(10-14). The alpha and beta chains form an alternating ring which encloses part of the gamma chain. F(1) is attached to F(0) by a central stalk formed by the gamma and epsilon chains, while a peripheral stalk is formed by the delta and b chains.

It is found in the cell inner membrane. Its function is as follows. F(1)F(0) ATP synthase produces ATP from ADP in the presence of a proton or sodium gradient. F-type ATPases consist of two structural domains, F(1) containing the extramembraneous catalytic core and F(0) containing the membrane proton channel, linked together by a central stalk and a peripheral stalk. During catalysis, ATP synthesis in the catalytic domain of F(1) is coupled via a rotary mechanism of the central stalk subunits to proton translocation. Component of the F(0) channel, it forms part of the peripheral stalk, linking F(1) to F(0). The protein is ATP synthase subunit b 1 of Rhodopseudomonas palustris (strain BisB18).